Consider the following 310-residue polypeptide: Putative integrase/recombinase y4rE (310 aa).

In terms of domain architecture, Core-binding (CB) spans 6-83 (RFLGEKVERY…VLRRFYEYLA (78 aa)). Residues 104–301 (PPPRILSEAE…SVDLLAMAAE (198 aa)) enclose the Tyr recombinase domain. Catalysis depends on residues Arg-148, Lys-173, His-245, Arg-248, and His-279. The active-site O-(3'-phospho-DNA)-tyrosine intermediate is the Tyr-288.

It belongs to the 'phage' integrase family.

This is Putative integrase/recombinase y4rE from Sinorhizobium fredii (strain NBRC 101917 / NGR234).